The chain runs to 454 residues: Guanine deaminase (454 aa).

Residues H82 and H84 each coordinate Zn(2+). Residues 84–87 (HASQ), 213–214 (RF), 240–243 (HISE), and D330 each bind substrate. Zn(2+) is bound by residues H240 and D330. Phosphoserine is present on S453.

This sequence belongs to the metallo-dependent hydrolases superfamily. ATZ/TRZ family. As to quaternary structure, homodimer. It depends on Zn(2+) as a cofactor.

It catalyses the reaction guanine + H2O + H(+) = xanthine + NH4(+). Its pathway is purine metabolism; guanine degradation; xanthine from guanine: step 1/1. Its function is as follows. Catalyzes the hydrolytic deamination of guanine, producing xanthine and ammonia. The protein is Guanine deaminase of Homo sapiens (Human).